A 216-amino-acid polypeptide reads, in one-letter code: Cytidylate kinase (216 aa).

7 to 15 (GPAASGKGT) contributes to the ATP binding site.

It belongs to the cytidylate kinase family. Type 1 subfamily.

The protein resides in the cytoplasm. The catalysed reaction is CMP + ATP = CDP + ADP. The enzyme catalyses dCMP + ATP = dCDP + ADP. The sequence is that of Cytidylate kinase from Methylocella silvestris (strain DSM 15510 / CIP 108128 / LMG 27833 / NCIMB 13906 / BL2).